Here is a 700-residue protein sequence, read N- to C-terminus: UvrABC system protein B (700 aa).

Residues 26–183 enclose the Helicase ATP-binding domain; sequence SGLHRGDRIQ…RALVGIQYLR (158 aa). An ATP-binding site is contributed by 39-46; sequence GVTGSGKT. The short motif at 92–115 is the Beta-hairpin element; the sequence is YYDYYQPEAYVPSSDTYIEKDASI. Residues 430–596 enclose the Helicase C-terminal domain; sequence QVDDLLHEIR…GVTKSVDEVR (167 aa). Residues 608–627 form a disordered region; it reads REGEAPAPRRLASESAPRSR. The UVR domain maps to 631–666; sequence ETLVGELEIAMREAAVALDFEAAARLRDQLFEVRTA. The tract at residues 667 to 700 is disordered; it reads LGQAPSEARGNAQAPKRPPGSAPQRRAGGGRRGR.

Belongs to the UvrB family. Forms a heterotetramer with UvrA during the search for lesions. Interacts with UvrC in an incision complex.

The protein localises to the cytoplasm. Functionally, the UvrABC repair system catalyzes the recognition and processing of DNA lesions. A damage recognition complex composed of 2 UvrA and 2 UvrB subunits scans DNA for abnormalities. Upon binding of the UvrA(2)B(2) complex to a putative damaged site, the DNA wraps around one UvrB monomer. DNA wrap is dependent on ATP binding by UvrB and probably causes local melting of the DNA helix, facilitating insertion of UvrB beta-hairpin between the DNA strands. Then UvrB probes one DNA strand for the presence of a lesion. If a lesion is found the UvrA subunits dissociate and the UvrB-DNA preincision complex is formed. This complex is subsequently bound by UvrC and the second UvrB is released. If no lesion is found, the DNA wraps around the other UvrB subunit that will check the other stand for damage. In Gemmatimonas aurantiaca (strain DSM 14586 / JCM 11422 / NBRC 100505 / T-27), this protein is UvrABC system protein B.